The sequence spans 223 residues: 7-carboxy-7-deazaguanine synthase (223 aa).

Residues 12-14 (LQG) and Arg-27 contribute to the substrate site. The Radical SAM core domain occupies 18–223 (FTGVPAIFIR…MQTHKYLNIA (206 aa)). Residues Cys-31, Cys-35, and Cys-38 each coordinate [4Fe-4S] cluster. A Mg(2+)-binding site is contributed by Thr-40. Substrate is bound at residue Thr-92. Residues Gly-94 and 136-138 (SPK) contribute to the S-adenosyl-L-methionine site.

Belongs to the radical SAM superfamily. 7-carboxy-7-deazaguanine synthase family. In terms of assembly, homodimer. [4Fe-4S] cluster serves as cofactor. Requires S-adenosyl-L-methionine as cofactor. The cofactor is Mg(2+).

It carries out the reaction 6-carboxy-5,6,7,8-tetrahydropterin + H(+) = 7-carboxy-7-deazaguanine + NH4(+). Its pathway is purine metabolism; 7-cyano-7-deazaguanine biosynthesis. Functionally, catalyzes the complex heterocyclic radical-mediated conversion of 6-carboxy-5,6,7,8-tetrahydropterin (CPH4) to 7-carboxy-7-deazaguanine (CDG), a step common to the biosynthetic pathways of all 7-deazapurine-containing compounds. The protein is 7-carboxy-7-deazaguanine synthase of Escherichia coli (strain K12).